We begin with the raw amino-acid sequence, 910 residues long: MAEAKRDYYEVLGLSRDADDNDIKKAFRKLAKKYHPDRNKAPDAAQIFAEINEANDVLSNPKKRANYDKYGHDGVDNEGGFAFQADVFDSFFEEIEKSGAFDNLSESNTKKKEKTKTKKKGWFWGKSKQEESTSDTTEYADVDAGLEDYPPQSDYPDDIPDVDARIEEVDQSAYADDIPDVDAGMDWEQNAEVANSASEIIPDVDAGLADEFNTSSAAPQASDWEAMIGNPEYGYFDAAGEWNWKGFFDEAGQWVWLEETEPSSVSNDETTTDSDAVTAATTVEETDQDSWTANSAPEPVDVETPVELQPETEPEPIITLSSEPVEAPASVVIEPTPEIEETTSAVEMDASVKADVSDEADATNEPTEQDTISEPEQETDAAALEEINHTTADLEPAEVSATNDLEQDVVEKVNFSEPESTVDTAATDPVVEQATETSTNGFKFFNFSSFVLSDQNPNPQTPTHHEEDAAAPEPTVDETSGESTAPEVTIAESTVELETAAEINNPATFVEEYLQPTKTTVVDKLDEPTVAKPTVSDSENSVAPEPEFVAGPEQTFSWKPAISETEEIPLTAVEPASETQTLIAEDVTSPVTPTATAIPAPSINAVPTAPVAETFEAAVDFLKEAAKIEAQLPLVPTVPEQIDGTDPSLLTQWDEYLEKTRKLFHKLFLTEQLPFIVKTDQFEIVDPNLDEHNVNLIYTEHVPQICFLNEQLKEIRYTRKLVDPQTQVTTTESITLEVQLSHKSQTEAIAIFKGFGHDYGSGCGDLKVVLKVIPSVFFQLQADGLHTAALVDPLVAYNGGLIDVFGPVNSFKVDIEGGIANNDLIEFNQLGVLRTKTKRGSLYVHLYYSSVAKKGTKTNCQVQQFFDLVHVEYKLLNYNLKQLHNYHSALTAQKKTLDRKSYQCLAVESH.

The J domain occupies 4–73; that stretch reads AKRDYYEVLG…RANYDKYGHD (70 aa). Disordered stretches follow at residues 102–160, 260–408, and 451–486; these read DNLS…DDIP, TEPS…LEQD, and VLSD…STAP. Over residues 111-121 the composition is skewed to basic residues; that stretch reads KKEKTKTKKKG. The span at 273–283 shows a compositional bias: low complexity; the sequence is DSDAVTAATTV. Over residues 357–379 the composition is skewed to acidic residues; the sequence is SDEADATNEPTEQDTISEPEQET. Positions 451 to 462 are enriched in polar residues; sequence VLSDQNPNPQTP.

This chain is DnaJ-like protein MG200 homolog, found in Mycoplasma pneumoniae (strain ATCC 29342 / M129 / Subtype 1) (Mycoplasmoides pneumoniae).